A 450-amino-acid polypeptide reads, in one-letter code: FAD-dependent monooxygenase okaB (450 aa).

Residues I14–G34 form a helical membrane-spanning segment. The FAD site is built by E43 and R116. R194 is a catalytic residue. D318 and G331 together coordinate FAD.

This sequence belongs to the paxM FAD-dependent monooxygenase family.

It localises to the membrane. The catalysed reaction is cyclo(N(8)-(alpha,alpha-dimethylallyl)-L-Trp-6a-(alpha,alpha-dimethylallyl)-L-Trp) + AH2 + O2 = okaramine C + A + H2O. Its pathway is alkaloid biosynthesis. In terms of biological role, FAD-dependent monooxygenase; part of the gene cluster that mediates the biosynthesis of okaramine B, a prenylated indole alkaloid that possesses an unusual octacyclic ring system, including a four-membered azetidine ring and an eight-membered azocine ring, and that exhibits insecticidal activity against silkworm larvae. Within the pathway, okaC performs indole 2,3-epoxidation, facilitating the formation of the hexahydropyrrolo[2,3-b]indole (HPI) moiety of okaramine C. okaC then performs asymmetric reverse prenylation of cyclo(L-Trp-L-Trp) at N-1 and C-2' of the indole ring to produce the cyclic prenylated tryptophan dimer cyclo(N8-(alpha,alpha-dimethylallyl)-L-Trp-6a-(alpha,alpha-dime-thylallyl)-L-Trp). The biosynthesis begins with the NRPS okaA that condenses two tryptophan molecules into cyclo(L-Trp-L-Trp). Prenylation by the prenyltransferase okaC then leads to the formation of cyclo(N8-(alpha,alpha-dimethylallyl)-L-Trp-6a-(alpha,alpha-dime-thylallyl)-L-Trp). This is followed by indole 2,3-epoxidation by the FAD-dependent monooxygenase okaB to facilitate the formation of the hexahydropyrrolo[2,3-b]indole (HPI) moiety of okaramine C. The cytochrome P450 monooxygenase okaD then likely catalyzes formation of the eight-membered ring of okaramine A. The dioxygenase okaE further forms the unusual 2-dimethyl-3-methyl-azetidine ring to yield 12-deshydroxyl okaramine E, as well as the hydroxylation of 12-deshydroxyl okaramine E to produce okaramine E. The cytochrome P450 monoxygenase okaG converts 12-deshydroxyl okaramine E into 3-desmethyl okaramine B which is further methylated by the methyltransferase okaF into okaramine B. In a shunt pathway, okaG and okaF together are also able to convert okaramine E into okaramine D. Okaramine H is produced by nonenzymatic conversion from okaramine A. In Penicillium ochrochloron, this protein is FAD-dependent monooxygenase okaB.